Here is an 85-residue protein sequence, read N- to C-terminus: Small ribosomal subunit protein uS17 (85 aa).

This sequence belongs to the universal ribosomal protein uS17 family. As to quaternary structure, part of the 30S ribosomal subunit.

One of the primary rRNA binding proteins, it binds specifically to the 5'-end of 16S ribosomal RNA. The polypeptide is Small ribosomal subunit protein uS17 (Mycoplasmoides gallisepticum (strain R(low / passage 15 / clone 2)) (Mycoplasma gallisepticum)).